The sequence spans 70 residues: Large ribosomal subunit protein bL31 (70 aa).

Zn(2+) contacts are provided by C16, C18, C37, and C40.

The protein belongs to the bacterial ribosomal protein bL31 family. Type A subfamily. In terms of assembly, part of the 50S ribosomal subunit. Zn(2+) is required as a cofactor.

Binds the 23S rRNA. The polypeptide is Large ribosomal subunit protein bL31 (Shewanella sediminis (strain HAW-EB3)).